A 132-amino-acid chain; its full sequence is Small ribosomal subunit protein uS11 (132 aa).

Belongs to the universal ribosomal protein uS11 family. As to quaternary structure, part of the 30S ribosomal subunit.

Its function is as follows. Located on the platform of the 30S subunit. In Caldivirga maquilingensis (strain ATCC 700844 / DSM 13496 / JCM 10307 / IC-167), this protein is Small ribosomal subunit protein uS11.